A 391-amino-acid polypeptide reads, in one-letter code: Probable protein arginine N-methyltransferase 6.1 (391 aa).

The disordered stretch occupies residues 1–35; the sequence is MLPSHLNGHSPLARRCPRLSAASPPATGDSDAAAA. A compositionally biased stretch (low complexity) spans 20-35; it reads SAASPPATGDSDAAAA. The SAM-dependent MTase PRMT-type domain maps to 45–391; the sequence is DRIYFQSYSH…QTLVKDYAMR (347 aa). S-adenosyl-L-methionine-binding residues include His-58, Arg-67, Gly-91, Glu-113, and Glu-142. Catalysis depends on residues Glu-156 and Glu-165.

Belongs to the class I-like SAM-binding methyltransferase superfamily. Protein arginine N-methyltransferase family. PRMT6 subfamily.

Its function is as follows. Arginine methyltransferase that can both catalyze the formation of omega-N monomethylarginine (MMA) and asymmetrical dimethylarginine (aDMA). This chain is Probable protein arginine N-methyltransferase 6.1 (PRMT6.1), found in Oryza sativa subsp. japonica (Rice).